The primary structure comprises 541 residues: Apolipoprotein N-acyltransferase (541 aa).

The next 6 membrane-spanning stretches (helical) occupy residues L21–L41, L54–L74, L82–S102, F116–F136, F157–F177, and M189–L209. In terms of domain architecture, CN hydrolase spans L220–L499. E264 (proton acceptor) is an active-site residue. K349 is an active-site residue. The Nucleophile role is filled by C404. The helical transmembrane segment at Y512–Y532 threads the bilayer.

It belongs to the CN hydrolase family. Apolipoprotein N-acyltransferase subfamily.

The protein resides in the cell inner membrane. The catalysed reaction is N-terminal S-1,2-diacyl-sn-glyceryl-L-cysteinyl-[lipoprotein] + a glycerophospholipid = N-acyl-S-1,2-diacyl-sn-glyceryl-L-cysteinyl-[lipoprotein] + a 2-acyl-sn-glycero-3-phospholipid + H(+). It functions in the pathway protein modification; lipoprotein biosynthesis (N-acyl transfer). Functionally, catalyzes the phospholipid dependent N-acylation of the N-terminal cysteine of apolipoprotein, the last step in lipoprotein maturation. This is Apolipoprotein N-acyltransferase from Chlamydia pneumoniae (Chlamydophila pneumoniae).